The sequence spans 555 residues: Dihydroxy-acid dehydratase (555 aa).

Residue D78 participates in Mg(2+) binding. C119 is a binding site for [2Fe-2S] cluster. Residues D120 and K121 each contribute to the Mg(2+) site. K121 is subject to N6-carboxylysine. Position 191 (C191) interacts with [2Fe-2S] cluster. Residue E444 coordinates Mg(2+). S470 acts as the Proton acceptor in catalysis.

The protein belongs to the IlvD/Edd family. Homodimer. The cofactor is [2Fe-2S] cluster. Requires Mg(2+) as cofactor.

The catalysed reaction is (2R)-2,3-dihydroxy-3-methylbutanoate = 3-methyl-2-oxobutanoate + H2O. It carries out the reaction (2R,3R)-2,3-dihydroxy-3-methylpentanoate = (S)-3-methyl-2-oxopentanoate + H2O. It functions in the pathway amino-acid biosynthesis; L-isoleucine biosynthesis; L-isoleucine from 2-oxobutanoate: step 3/4. Its pathway is amino-acid biosynthesis; L-valine biosynthesis; L-valine from pyruvate: step 3/4. Functions in the biosynthesis of branched-chain amino acids. Catalyzes the dehydration of (2R,3R)-2,3-dihydroxy-3-methylpentanoate (2,3-dihydroxy-3-methylvalerate) into 2-oxo-3-methylpentanoate (2-oxo-3-methylvalerate) and of (2R)-2,3-dihydroxy-3-methylbutanoate (2,3-dihydroxyisovalerate) into 2-oxo-3-methylbutanoate (2-oxoisovalerate), the penultimate precursor to L-isoleucine and L-valine, respectively. This is Dihydroxy-acid dehydratase from Maridesulfovibrio salexigens (strain ATCC 14822 / DSM 2638 / NCIMB 8403 / VKM B-1763) (Desulfovibrio salexigens).